The chain runs to 372 residues: Actin-related protein 2/3 complex subunit 1B (372 aa).

6 WD repeats span residues 6–45, 50–89, 94–135, 140–179, 242–280, and 324–367; these read FLVEPISCHAWNKDRTQIAICPNNHEVHIYEKSGAKWTKV, EHNGQVTGIDWAPESNRIVTCGTDRNAYVWTLKGRTWKPT, RINR…WVCK, PIRSTVLSLDWHPNNVLLAAGSCDFKCRIFSAYIKEVEER, SETLPLLALTFITDNSLVAAGHDCFPVLFTYDAAAGMLS, and LHKN…SALK.

It belongs to the WD repeat ARPC1 family. In terms of assembly, component of the Arp2/3 complex composed of ACTR2/ARP2, ACTR3/ARP3, ARPC1B/p41-ARC, ARPC2/p34-ARC, ARPC3/p21-ARC, ARPC4/p20-ARC and ARPC5/p16-ARC.

Its subcellular location is the cytoplasm. The protein resides in the cytoskeleton. The protein localises to the nucleus. Functionally, component of the Arp2/3 complex, a multiprotein complex that mediates actin polymerization upon stimulation by nucleation-promoting factor (NPF). The Arp2/3 complex mediates the formation of branched actin networks in the cytoplasm, providing the force for cell motility. In addition to its role in the cytoplasmic cytoskeleton, the Arp2/3 complex also promotes actin polymerization in the nucleus, thereby regulating gene transcription and repair of damaged DNA. The Arp2/3 complex promotes homologous recombination (HR) repair in response to DNA damage by promoting nuclear actin polymerization, leading to drive motility of double-strand breaks (DSBs). The protein is Actin-related protein 2/3 complex subunit 1B of Homo sapiens (Human).